The following is a 550-amino-acid chain: Chaperonin GroEL (550 aa).

ATP-binding positions include 29 to 32 (TAGP), Lys-50, 86 to 90 (DGTTT), Gly-416, and Asp-498.

Belongs to the chaperonin (HSP60) family. As to quaternary structure, forms a cylinder of 14 subunits composed of two heptameric rings stacked back-to-back. Interacts with the co-chaperonin GroES.

Its subcellular location is the cytoplasm. It carries out the reaction ATP + H2O + a folded polypeptide = ADP + phosphate + an unfolded polypeptide.. Together with its co-chaperonin GroES, plays an essential role in assisting protein folding. The GroEL-GroES system forms a nano-cage that allows encapsulation of the non-native substrate proteins and provides a physical environment optimized to promote and accelerate protein folding. The protein is Chaperonin GroEL of Anaplasma phagocytophilum (strain HZ).